Reading from the N-terminus, the 267-residue chain is Diphthine synthase (267 aa).

Residues Leu9, Asp87, Ile90, 115–116 (SI), Leu166, Leu205, and His230 each bind S-adenosyl-L-methionine.

Belongs to the diphthine synthase family. As to quaternary structure, homodimer.

The enzyme catalyses 2-[(3S)-amino-3-carboxypropyl]-L-histidyl-[translation elongation factor 2] + 3 S-adenosyl-L-methionine = diphthine-[translation elongation factor 2] + 3 S-adenosyl-L-homocysteine + 3 H(+). It participates in protein modification; peptidyl-diphthamide biosynthesis. Functionally, S-adenosyl-L-methionine-dependent methyltransferase that catalyzes the trimethylation of the amino group of the modified target histidine residue in translation elongation factor 2 (EF-2), to form an intermediate called diphthine. The three successive methylation reactions represent the second step of diphthamide biosynthesis. The protein is Diphthine synthase of Staphylothermus marinus (strain ATCC 43588 / DSM 3639 / JCM 9404 / F1).